The primary structure comprises 211 residues: Probable nicotinate-nucleotide adenylyltransferase (211 aa).

The protein belongs to the NadD family.

It catalyses the reaction nicotinate beta-D-ribonucleotide + ATP + H(+) = deamido-NAD(+) + diphosphate. It participates in cofactor biosynthesis; NAD(+) biosynthesis; deamido-NAD(+) from nicotinate D-ribonucleotide: step 1/1. In terms of biological role, catalyzes the reversible adenylation of nicotinate mononucleotide (NaMN) to nicotinic acid adenine dinucleotide (NaAD). In Legionella pneumophila (strain Paris), this protein is Probable nicotinate-nucleotide adenylyltransferase.